The following is a 382-amino-acid chain: Flap endonuclease 1 (382 aa).

The segment at 1-104 (MGIKGLSQVI…GELEKRSERR (104 aa)) is N-domain. Asp34 is a binding site for Mg(2+). DNA contacts are provided by Arg47 and Arg70. Mg(2+) contacts are provided by Asp86, Glu158, Glu160, Asp179, and Asp181. The segment at 122–253 (EAEKFERRLV…KKAVELIRQH (132 aa)) is I-domain. Residue Glu158 coordinates DNA. DNA-binding residues include Gly231 and Asp233. Position 233 (Asp233) interacts with Mg(2+). An interaction with PCNA region spans residues 336 to 344 (TQGRIDSFF). Residues 358–382 (KRKAEEAEKAKKGAKKGGPPKKRAK) are disordered. A compositionally biased stretch (basic and acidic residues) spans 359-368 (RKAEEAEKAK). Positions 369-382 (KGAKKGGPPKKRAK) are enriched in basic residues.

The protein belongs to the XPG/RAD2 endonuclease family. FEN1 subfamily. As to quaternary structure, interacts with PCNA. Three molecules of crn-1 bind to one PCNA trimer with each molecule binding to one PCNA monomer. PCNA stimulates the nuclease activity without altering cleavage specificity. Interacts with cps-6. It depends on Mg(2+) as a cofactor. Post-translationally, phosphorylated. Phosphorylation upon DNA damage induces relocalization to the nuclear plasma.

The protein localises to the nucleus. The protein resides in the nucleolus. Its subcellular location is the nucleoplasm. It is found in the mitochondrion. Structure-specific nuclease with 5'-flap endonuclease and 5'-3' exonuclease activities involved in DNA replication and repair. During DNA replication, cleaves the 5'-overhanging flap structure that is generated by displacement synthesis when DNA polymerase encounters the 5'-end of a downstream Okazaki fragment. It enters the flap from the 5'-end and then tracks to cleave the flap base, leaving a nick for ligation. Also involved in the long patch base excision repair (LP-BER) pathway, by cleaving within the apurinic/apyrimidinic (AP) site-terminated flap. Acts as a genome stabilization factor that prevents flaps from equilibrating into structures that lead to duplications and deletions. Also possesses 5'-3' exonuclease activity on nicked or gapped double-stranded DNA, and exhibits RNase H activity. Also involved in replication and repair of rDNA and in repairing mitochondrial DNA. Can associate and cooperate with cps-6 to promote stepwise DNA fragmentation, utilizing the endonuclease activity of cps-6 and both of its own 5'-3' exonuclease activity and gap-dependent endonuclease activity. May play a critical role in switching the state of cells from DNA replication/repair to DNA degradation during apoptosis. The polypeptide is Flap endonuclease 1 (Caenorhabditis elegans).